Reading from the N-terminus, the 750-residue chain is Photosystem I P700 chlorophyll a apoprotein A1 (750 aa).

8 helical membrane-spanning segments follow: residues 70–93 (VFSAHFGQLAIIFIWLSGMYFHGA), 156–179 (LYSTAIGGLIFAALMLFAGWFHYH), 195–219 (LNHHLAGLLGLGSLAWAGHQVHVSL), 291–309 (TAHHHLAIAVVFLVAGHMY), 346–369 (WHAQLALNLAMLGSLTIIVAHHMY), 385–411 (LSLFTHHMWIGGFTIVGAAAHAAIFMV), 433–455 (AIISHLNWACIFLGFHSFGLYIH), and 531–549 (FLVHHIHAFTIHVTVLILL). [4Fe-4S] cluster is bound by residues cysteine 573 and cysteine 582. A run of 2 helical transmembrane segments spans residues 589-610 (HVFLGLFWMYNAISVVIFHFSW) and 664-686 (LSAYGLLFLGAHFVWAFSLMFLF). Histidine 675 is a chlorophyll a' binding site. 2 residues coordinate chlorophyll a: methionine 683 and tyrosine 691. Phylloquinone is bound at residue tryptophan 692. A helical membrane pass occupies residues 724–744 (AVGVAHYLLGGIATTWAFFLA).

It belongs to the PsaA/PsaB family. The PsaA/B heterodimer binds the P700 chlorophyll special pair and subsequent electron acceptors. PSI consists of a core antenna complex that captures photons, and an electron transfer chain that converts photonic excitation into a charge separation. The eukaryotic PSI reaction center is composed of at least 11 subunits. It depends on P700 is a chlorophyll a/chlorophyll a' dimer, A0 is one or more chlorophyll a, A1 is one or both phylloquinones and FX is a shared 4Fe-4S iron-sulfur center. as a cofactor.

The protein localises to the plastid. It localises to the chloroplast thylakoid membrane. It catalyses the reaction reduced [plastocyanin] + hnu + oxidized [2Fe-2S]-[ferredoxin] = oxidized [plastocyanin] + reduced [2Fe-2S]-[ferredoxin]. In terms of biological role, psaA and PsaB bind P700, the primary electron donor of photosystem I (PSI), as well as the electron acceptors A0, A1 and FX. PSI is a plastocyanin-ferredoxin oxidoreductase, converting photonic excitation into a charge separation, which transfers an electron from the donor P700 chlorophyll pair to the spectroscopically characterized acceptors A0, A1, FX, FA and FB in turn. Oxidized P700 is reduced on the lumenal side of the thylakoid membrane by plastocyanin. The chain is Photosystem I P700 chlorophyll a apoprotein A1 from Anthoceros angustus (Hornwort).